The following is a 169-amino-acid chain: Probable phospholipid hydroperoxide glutathione peroxidase (169 aa).

Residue C43 is part of the active site.

It belongs to the glutathione peroxidase family.

It is found in the cytoplasm. The enzyme catalyses a hydroperoxy polyunsaturated fatty acid + 2 glutathione = a hydroxy polyunsaturated fatty acid + glutathione disulfide + H2O. Protects cells and enzymes from oxidative damage, by catalyzing the reduction of hydrogen peroxide, lipid peroxides and organic hydroperoxide, by glutathione. The chain is Probable phospholipid hydroperoxide glutathione peroxidase from Nicotiana tabacum (Common tobacco).